A 188-amino-acid polypeptide reads, in one-letter code: Putative 3-methyladenine DNA glycosylase (188 aa).

It belongs to the DNA glycosylase MPG family.

This chain is Putative 3-methyladenine DNA glycosylase, found in Ehrlichia ruminantium (strain Welgevonden).